The sequence spans 192 residues: Pupal cuticle protein (192 aa).

Residues 1 to 15 (MHLLMSLFGVLAVMQ) form the signal peptide. The Chitin-binding type R&amp;R domain occupies 45 to 106 (DGNYRYAYET…PVGDHIPKVP (62 aa)). Positions 149 to 163 (QDQTTPRSRPSSTPK) are enriched in polar residues. The disordered stretch occupies residues 149–192 (QDQTTPRSRPSSTPKTIYLTHPPTLSDAPTRRPLRQRQNDSRRR).

In terms of biological role, component of the cuticle of the pupa of fruit fly. The polypeptide is Pupal cuticle protein (Pcp) (Drosophila pseudoobscura pseudoobscura (Fruit fly)).